The following is a 403-amino-acid chain: MNSGDIMKLNIKKILTIGKREVLSNIKRKQFLIATIIGPLIIIALAIIGSFMMFDIKEIKVGYVDEFGLGIPNKVVENNFGKNTTIYFIKYENIEKGKEDVLNKSIDALIVIPKDYLDSGKIILYSTTKSPNPIITDTLNKFLLKKLLKGKVDNKTYNRVINPMNLEIYSVSKKGFEKETFLSQLLPIGFVFLLYMAISSLSGIIVSSIIEEKQNRIMELLLCYSSAENLMFGKILGISAVGLLQIGIWVLFALPIIITYAVKVSLYLAIFALIYFVLGYLFYSSLLCGLSSLFSHPKDASQLISPIIIIQIIPIMFMNTIMVNPNHYMAKILSYVPFTAPYAVVLRASVTQLPLIEIVLSTAIMIVSIVISFILSIKLFKIGVLLYEENLTLKRVIKIIFKK.

6 helical membrane passes run 31–51, 186–206, 238–258, 268–288, 303–323, and 355–375; these read FLIATIIGPLIIIALAIIGSF, LPIGFVFLLYMAISSLSGIIV, ISAVGLLQIGIWVLFALPIII, LAIFALIYFVLGYLFYSSLLC, LISPIIIIQIIPIMFMNTIMV, and LIEIVLSTAIMIVSIVISFIL.

It to B.subtilis YhaP.

Its subcellular location is the cell membrane. This is an uncharacterized protein from Methanocaldococcus jannaschii (strain ATCC 43067 / DSM 2661 / JAL-1 / JCM 10045 / NBRC 100440) (Methanococcus jannaschii).